Reading from the N-terminus, the 61-residue chain is Probable tautomerase SSP1389 (61 aa).

Proline 2 serves as the catalytic Proton acceptor; via imino nitrogen.

Belongs to the 4-oxalocrotonate tautomerase family.

The protein is Probable tautomerase SSP1389 of Staphylococcus saprophyticus subsp. saprophyticus (strain ATCC 15305 / DSM 20229 / NCIMB 8711 / NCTC 7292 / S-41).